The primary structure comprises 213 residues: Ras-related protein Rab-39B (213 aa).

GTP is bound by residues Ser-17, Gly-20, Lys-21, Ser-22, Cys-23, Ser-37, and Thr-40. Ser-22 lines the Mg(2+) pocket. Residues 35-43 (QVSDPTVGV) are switch-I. Mg(2+) is bound by residues Thr-40 and Asp-64. GTP is bound by residues Gly-67, His-123, Lys-124, Asp-126, Ala-154, and Arg-155. Residues 67 to 83 (GQERFRSITRAYYRNSV) form a switch-II region. Ser-201 bears the Phosphoserine mark. 2 S-geranylgeranyl cysteine lipidation sites follow: Cys-211 and Cys-213. Residue Cys-213 is modified to Cysteine methyl ester.

The protein belongs to the small GTPase superfamily. Rab family. Interacts (GDP-bound) with C9orf72; C9orf72 in complex with SMCR8 acts as a GEF for RAB39B. Interacts (in GTP-bound form) with PICK1 (via PDZ domain); a PICK1 homodimer may allow simultaneous association of RAB39B and GRIA2 to PICK1 which is involved in GRIA2 trafficking. Interacts with isoform c of RASSF1; the interaction is strong. Interacts with isoform a of RASSF1; the interaction is weak. Interacts with the DLG4/PSD-95. Interacts (GTP-bound) with HOPS complex components VPS39 and VPS41. The cofactor is Mg(2+). Highly expressed in the brain.

The protein resides in the cell membrane. Its subcellular location is the cytoplasmic vesicle membrane. The protein localises to the golgi apparatus. It localises to the cytoplasmic vesicle. It is found in the autophagosome membrane. The protein resides in the autolysosome membrane. It carries out the reaction GTP + H2O = GDP + phosphate + H(+). Its activity is regulated as follows. Regulated by guanine nucleotide exchange factors (GEFs) including C9orf72-SMCR8 complex, which promote the exchange of bound GDP for free GTP. Regulated by GTPase activating proteins (GAPs) which increase the GTP hydrolysis activity. Inhibited by GDP dissociation inhibitors (GDIs). Functionally, the small GTPases Rab are key regulators of intracellular membrane trafficking, from the formation of transport vesicles to their fusion with membranes. Rabs cycle between an inactive GDP-bound form and an active GTP-bound form that is able to recruit to membranes different sets of downstream effectors directly responsible for vesicle formation, movement, tethering and fusion. RAB39B is involved in autophagy and may function in autophagosome formation. Binds downstream effector PICK1 to ensure selectively GRIA2 exit from the endoplasmic reticulum to the Golgi and to regulate AMPAR composition at the post-synapses and thus synaptic transmission. May regulate the homeostasis of SNCA/alpha-synuclein. This Homo sapiens (Human) protein is Ras-related protein Rab-39B.